Reading from the N-terminus, the 187-residue chain is Accessory gene regulator protein B (187 aa).

The next 5 membrane-spanning stretches (helical) occupy residues Ile49–Ile69, Ile82–Ile102, Phe106–Ala126, Val144–Ala164, and Phe166–Glu186.

Belongs to the AgrB family.

The protein resides in the cell membrane. Essential for the production of a quorum sensing system signal molecule, the autoinducing peptide (AIP). This quorum sensing system is responsible for the regulation of the expression of virulence factor genes. Involved in the proteolytic processing of AgrD, the precursor of AIP. In Staphylococcus aureus (strain bovine RF122 / ET3-1), this protein is Accessory gene regulator protein B.